The following is a 182-amino-acid chain: ATP synthase subunit delta (182 aa).

This sequence belongs to the ATPase delta chain family. F-type ATPases have 2 components, F(1) - the catalytic core - and F(0) - the membrane proton channel. F(1) has five subunits: alpha(3), beta(3), gamma(1), delta(1), epsilon(1). CF(0) has four main subunits: a(1), b(1), b'(1) and c(10-14). The alpha and beta chains form an alternating ring which encloses part of the gamma chain. F(1) is attached to F(0) by a central stalk formed by the gamma and epsilon chains, while a peripheral stalk is formed by the delta, b and b' chains.

The protein localises to the cellular thylakoid membrane. F(1)F(0) ATP synthase produces ATP from ADP in the presence of a proton or sodium gradient. F-type ATPases consist of two structural domains, F(1) containing the extramembraneous catalytic core and F(0) containing the membrane proton channel, linked together by a central stalk and a peripheral stalk. During catalysis, ATP synthesis in the catalytic domain of F(1) is coupled via a rotary mechanism of the central stalk subunits to proton translocation. Its function is as follows. This protein is part of the stalk that links CF(0) to CF(1). It either transmits conformational changes from CF(0) to CF(1) or is implicated in proton conduction. This chain is ATP synthase subunit delta, found in Prochlorococcus marinus (strain NATL1A).